The following is a 209-amino-acid chain: Uracil phosphoribosyltransferase (209 aa).

5-phospho-alpha-D-ribose 1-diphosphate is bound by residues R79, R104, and 131 to 139 (DPMLATGNS). Uracil contacts are provided by residues I194 and 199-201 (GDA). Residue D200 coordinates 5-phospho-alpha-D-ribose 1-diphosphate.

Belongs to the UPRTase family. The cofactor is Mg(2+).

The catalysed reaction is UMP + diphosphate = 5-phospho-alpha-D-ribose 1-diphosphate + uracil. It participates in pyrimidine metabolism; UMP biosynthesis via salvage pathway; UMP from uracil: step 1/1. Allosterically activated by GTP. Catalyzes the conversion of uracil and 5-phospho-alpha-D-ribose 1-diphosphate (PRPP) to UMP and diphosphate. The polypeptide is Uracil phosphoribosyltransferase (Rhizobium etli (strain CIAT 652)).